The primary structure comprises 958 residues: UvrABC system protein A (958 aa).

The ABC transporter 1 domain occupies 1–232 (MQSKSIKIQG…IETALKLGEG (232 aa)). Residue 33–40 (GLSGSGKS) coordinates ATP. The segment at 252–279 (CPICGFSIGELEPRLFSFNSPFGACPSC) adopts a C4-type zinc-finger fold. ABC transporter domains follow at residues 315-593 (QYYP…KYLS) and 604-935 (RRKP…GKYL). 639–646 (GVSGSGKS) provides a ligand contact to ATP. The C4-type zinc finger occupies 738–764 (CEACRGDGILKIEMHFLPDVYVPCEVC).

This sequence belongs to the ABC transporter superfamily. UvrA family. As to quaternary structure, forms a heterotetramer with UvrB during the search for lesions.

Its subcellular location is the cytoplasm. Functionally, the UvrABC repair system catalyzes the recognition and processing of DNA lesions. UvrA is an ATPase and a DNA-binding protein. A damage recognition complex composed of 2 UvrA and 2 UvrB subunits scans DNA for abnormalities. When the presence of a lesion has been verified by UvrB, the UvrA molecules dissociate. The chain is UvrABC system protein A from Oceanobacillus iheyensis (strain DSM 14371 / CIP 107618 / JCM 11309 / KCTC 3954 / HTE831).